The chain runs to 91 residues: Small ribosomal subunit protein uS19 (91 aa).

Belongs to the universal ribosomal protein uS19 family.

In terms of biological role, protein S19 forms a complex with S13 that binds strongly to the 16S ribosomal RNA. The protein is Small ribosomal subunit protein uS19 of Hahella chejuensis (strain KCTC 2396).